The following is a 276-amino-acid chain: F420-dependent methylenetetrahydromethanopterin dehydrogenase (276 aa).

The protein belongs to the MTD family.

It carries out the reaction 5,10-methylenetetrahydromethanopterin + oxidized coenzyme F420-(gamma-L-Glu)(n) + 2 H(+) = 5,10-methenyl-5,6,7,8-tetrahydromethanopterin + reduced coenzyme F420-(gamma-L-Glu)(n). It participates in one-carbon metabolism; methanogenesis from CO(2); 5,10-methylene-5,6,7,8-tetrahydromethanopterin from 5,10-methenyl-5,6,7,8-tetrahydromethanopterin (coenzyme F420 route): step 1/1. In terms of biological role, catalyzes the reversible reduction of methenyl-H(4)MPT(+) to methylene-H(4)MPT. This chain is F420-dependent methylenetetrahydromethanopterin dehydrogenase, found in Methanococcus vannielii (strain ATCC 35089 / DSM 1224 / JCM 13029 / OCM 148 / SB).